The primary structure comprises 359 residues: Tyrosine-protein phosphatase non-receptor type 7 (359 aa).

Residues 1–34 (MVQACEGRSRAQLPTLSLGADMTQPPPAKAPAKK) form a disordered region. Residues 38–51 (LQERRGSSVALMLD) form an interaction with MAP kinases region. A Phosphoserine modification is found at Ser-44. Residue Thr-66 is modified to Phosphothreonine. 2 positions are modified to phosphoserine: Ser-93 and Ser-143. Residues 97–349 (LEEEFLKIPS…QFLHHTLALY (253 aa)) enclose the Tyrosine-protein phosphatase domain. Residues Asp-257, 290–296 (CSAGIGR), and Gln-334 contribute to the substrate site. Cys-290 acts as the Phosphocysteine intermediate in catalysis. The residue at position 290 (Cys-290) is a Cysteine sulfenic acid (-SOH).

Belongs to the protein-tyrosine phosphatase family. Non-receptor class subfamily. Post-translationally, oxidized at active site cysteine. Treatment with pervanadate (vanadate and H(2)O(2)) or with antigen enhanced oxidation of active site cysteine.

The protein localises to the cytoplasm. Its subcellular location is the cytoskeleton. It catalyses the reaction O-phospho-L-tyrosyl-[protein] + H2O = L-tyrosyl-[protein] + phosphate. Its activity is regulated as follows. Inhibited in cells after FCER1A triggering. In terms of biological role, may play a role in the regulation of T and B-lymphocyte development and signal transduction. This is Tyrosine-protein phosphatase non-receptor type 7 (Ptpn7) from Rattus norvegicus (Rat).